The sequence spans 155 residues: Non-secretory ribonuclease (155 aa).

A signal peptide spans 1 to 25 (MGPKLLESRLCLLLLLGLVLMLASC). K33 serves as a coordination point for substrate. H38 acts as the Proton acceptor in catalysis. N41 carries an N-linked (GlcNAc...) asparagine glycan. 4 disulfides stabilise this stretch: C47/C106, C61/C118, C79/C133, and C86/C94. Y57 carries the post-translational modification 3'-nitrotyrosine. Residue 62-66 (KDINT) participates in substrate binding. Residues N83, N88, and N107 are each glycosylated (N-linked (GlcNAc...) asparagine). The Proton donor role is filled by H150.

This sequence belongs to the pancreatic ribonuclease family. Interacts with and forms a tight 1:1 complex with RNH1. Dimerization of two such complexes may occur.

It localises to the lysosome. The protein resides in the cytoplasmic granule. The enzyme catalyses an [RNA] containing cytidine + H2O = an [RNA]-3'-cytidine-3'-phosphate + a 5'-hydroxy-ribonucleotide-3'-[RNA].. It carries out the reaction an [RNA] containing uridine + H2O = an [RNA]-3'-uridine-3'-phosphate + a 5'-hydroxy-ribonucleotide-3'-[RNA].. In terms of biological role, this is a non-secretory ribonuclease. It is a pyrimidine specific nuclease with a slight preference for U. Cytotoxin and helminthotoxin. Possesses a wide variety of biological activities. The sequence is that of Non-secretory ribonuclease (Rnase2) from Mus musculus (Mouse).